Here is a 297-residue protein sequence, read N- to C-terminus: Probable GTP 3',8-cyclase (297 aa).

The Radical SAM core domain occupies 4-220 (EFGREIRSFR…VVTRKFMQNR (217 aa)). Position 13 (arginine 13) interacts with GTP. The [4Fe-4S] cluster site is built by cysteine 20 and cysteine 24. Residue tyrosine 26 coordinates S-adenosyl-L-methionine. A [4Fe-4S] cluster-binding site is contributed by cysteine 27. Lysine 61 contributes to the GTP binding site. Glycine 65 contacts S-adenosyl-L-methionine. Residue threonine 91 coordinates GTP. Serine 115 is a binding site for S-adenosyl-L-methionine. GTP is bound at residue lysine 151. Positions 242 and 245 each coordinate [4Fe-4S] cluster. 247 to 249 (RIR) provides a ligand contact to GTP. Cysteine 259 lines the [4Fe-4S] cluster pocket.

The protein belongs to the radical SAM superfamily. MoaA family. [4Fe-4S] cluster is required as a cofactor.

It catalyses the reaction GTP + AH2 + S-adenosyl-L-methionine = (8S)-3',8-cyclo-7,8-dihydroguanosine 5'-triphosphate + 5'-deoxyadenosine + L-methionine + A + H(+). It participates in cofactor biosynthesis; molybdopterin biosynthesis. Catalyzes the cyclization of GTP to (8S)-3',8-cyclo-7,8-dihydroguanosine 5'-triphosphate. The sequence is that of Probable GTP 3',8-cyclase from Methanococcus vannielii (strain ATCC 35089 / DSM 1224 / JCM 13029 / OCM 148 / SB).